The primary structure comprises 79 residues: Large ribosomal subunit protein uL22 (79 aa).

Belongs to the universal ribosomal protein uL22 family. In terms of assembly, part of the 50S ribosomal subunit.

Its function is as follows. This protein binds specifically to 23S rRNA; its binding is stimulated by other ribosomal proteins, e.g. L4, L17, and L20. It is important during the early stages of 50S assembly. It makes multiple contacts with different domains of the 23S rRNA in the assembled 50S subunit and ribosome. The globular domain of the protein is located near the polypeptide exit tunnel on the outside of the subunit, while an extended beta-hairpin is found that lines the wall of the exit tunnel in the center of the 70S ribosome. In Prunus armeniaca phytoplasma, this protein is Large ribosomal subunit protein uL22 (rplV).